The primary structure comprises 158 residues: Pycsar effector protein SaPycTM (158 aa).

Helical transmembrane passes span 20–40 (FADAKALAIISINGFILNFNF), 53–73 (IFNFTAFILLIITIILAAFAV), and 136–156 (VFIISALGYSCLLFSSIFQII).

It is found in the cell membrane. In terms of biological role, pycsar (pyrimidine cyclase system for antiphage resistance) provides immunity against bacteriophage. The pyrimidine cyclase (PycC) synthesizes cyclic nucleotides in response to infection; these serve as specific second messenger signals. The signals activate the adjacent effector, leading to bacterial cell death and abortive phage infection. A clade E Pycsar system. Functionally, the effector gene of a two-gene Pycsar system. Expression of this and adjacent SaPycC cytidylate cyclase (AC P0DV38) probably confers resistance to bacteriophage. The genes are probably only expressed in response to bacteriophage infection. Probably only responds to cCMP (produced by its cognate NTP cyclase), acts by impairing membrane integrity. The protein is Pycsar effector protein SaPycTM of Staphylococcus aureus.